The following is a 121-amino-acid chain: MPKKRSSPNRNVQIADQIQRDLSDLLREVKDPRIGIVTIQSVELTPDYAHAKVYFTTLTGDPQQTLEALTHAAGHLHNQLFKRLHIHTVPTLHFHYDKTIERAVEMSRLIDEANANRAKED.

Belongs to the RbfA family. Monomer. Binds 30S ribosomal subunits, but not 50S ribosomal subunits or 70S ribosomes.

Its subcellular location is the cytoplasm. Its function is as follows. One of several proteins that assist in the late maturation steps of the functional core of the 30S ribosomal subunit. Associates with free 30S ribosomal subunits (but not with 30S subunits that are part of 70S ribosomes or polysomes). Required for efficient processing of 16S rRNA. May interact with the 5'-terminal helix region of 16S rRNA. In Paraburkholderia phytofirmans (strain DSM 17436 / LMG 22146 / PsJN) (Burkholderia phytofirmans), this protein is Ribosome-binding factor A.